The primary structure comprises 179 residues: O-acetyl-ADP-ribose deacetylase (179 aa).

Positions 1–175 (MTSRLQVIQG…LYARLLTQQG (175 aa)) constitute a Macro domain. Substrate is bound by residues 11–12 (DI), asparagine 25, 33–35 (GVD), and 122–126 (STGVY). Aspartate 35 serves as the catalytic Proton acceptor.

This sequence belongs to the MacroD-type family. YmdB subfamily. As to quaternary structure, homodimer. Interacts with RNase III.

The enzyme catalyses 3''-O-acetyl-ADP-D-ribose + H2O = ADP-D-ribose + acetate + H(+). It carries out the reaction 2''-O-acetyl-ADP-D-ribose + H2O = ADP-D-ribose + acetate + H(+). Functionally, deacetylates O-acetyl-ADP ribose to yield ADP-ribose and free acetate. Down-regulates ribonuclease 3 (RNase III) activity. Acts by interacting directly with the region of the ribonuclease that is required for dimerization/activation. In Salmonella typhi, this protein is O-acetyl-ADP-ribose deacetylase.